The following is a 182-amino-acid chain: Neuropeptide CCHamide-1 (182 aa).

Residues 1–22 (MWYSKCSWTLVVLVALFALVTG) form the signal peptide. Cys-24 and Cys-31 are disulfide-bonded. Residue His-35 is modified to Histidine amide. A propeptide spanning residues 39–182 (SGGKAVIDAK…ENYSGYELTK (144 aa)) is cleaved from the precursor. 2 disordered regions span residues 67-103 (NNNNNNQNNQDDDNNDDDSNRNTNANSANNIPLAAPA) and 133-154 (QLQDQQQQGRGRGGQGQYDAAA). The span at 87–103 (RNTNANSANNIPLAAPA) shows a compositional bias: low complexity. The N-linked (GlcNAc...) asparagine glycan is linked to Asn-174.

As to expression, expressed in endocrine cells of the larval midgut (at protein level). In the brain, expressed in the optic lobes, lateral protocerebrum, subesophageal ganglion, and intermediate and superior medial protocerebrum (at protein level). Expressed in DN1a neurons but not in other clock neurons and expression follows a rhythmic pattern controlled by the circadian clock (at protein level). In the posterior midgut, expressed in enteroendocrine cells (at protein level). Low levels in larval brain with higher levels in larval and adult gut and adult brain.

The protein localises to the secreted. Its function is as follows. Neuropeptide ligand for the CCHamide-1 receptor CCHa1-R. Neuromessenger mediating signaling between neuronal cells of the circadian clock network involved in regulation of sleep latency (the time required to fall asleep), amount of sleep and depth of sleep (arousability). Together with PDF, involved in regulating intensity and periodicity of daytime activity. In subsets of clock neurons modulates the rhythmic expression of PDP1 and PDF, and together with PDF modulates the rhythmic expression of circadian protein PER/period, but not TIM/timeless. Mediates signaling from DN1a (anterior dorsal neurons 1) clock neurons to s-LNv (small ventral lateral neurons) clock neurons through CCHa1-R, contributing to regulation of activity rhythms by the circadian clock, particularly in the morning. May be involved in signaling between clock neurons and non-clock neurons, such as the fan-shaped body, involved in sleep homeostasis. In response to a high protein diet mediates hormonal signaling between the gut and a CCHa1-R expressing subset of dopaminergic cells in the protocerebral anterior medial (PAM) cluster of the brain. This suppresses arousability by mechano-sensory stimulation (but not thermal stimulation) but is not involved in regulation of sleep patterns. The polypeptide is Neuropeptide CCHamide-1 (Drosophila melanogaster (Fruit fly)).